The chain runs to 505 residues: RNA-splicing ligase RtcB homolog (505 aa).

The Mn(2+) site is built by Asp-119, Cys-122, His-227, His-259, and His-353. 226–230 lines the GMP pocket; the sequence is NHYAE. GMP contacts are provided by residues 353 to 354, 402 to 405, Ser-409, 428 to 431, and Lys-504; these read HN, GGSM, and HGAG. His-428 functions as the GMP-histidine intermediate in the catalytic mechanism.

This sequence belongs to the RtcB family. In terms of assembly, catalytic component of the tRNA-splicing ligase complex. Mn(2+) is required as a cofactor.

The protein localises to the nucleus. It is found in the cytoplasm. It carries out the reaction a 3'-end 3'-phospho-ribonucleotide-RNA + a 5'-end dephospho-ribonucleoside-RNA + GTP = a ribonucleotidyl-ribonucleotide-RNA + GMP + diphosphate. The catalysed reaction is a 3'-end 2',3'-cyclophospho-ribonucleotide-RNA + a 5'-end dephospho-ribonucleoside-RNA + GTP + H2O = a ribonucleotidyl-ribonucleotide-RNA + GMP + diphosphate + H(+). Catalytic subunit of the tRNA-splicing ligase complex that acts by directly joining spliced tRNA halves to mature-sized tRNAs. Required for the ligation of mRNAs and specifically, regulates xbp-1 mRNA splicing during the endoplasmic reticulum stress-induced unfolded protein response. Has a neuroprotective role in the age-dependent degeneration of dopamine neurons, which is mediated by xbp-1. This is RNA-splicing ligase RtcB homolog from Caenorhabditis elegans.